Here is a 135-residue protein sequence, read N- to C-terminus: Large ribosomal subunit protein bL17 (135 aa).

The protein belongs to the bacterial ribosomal protein bL17 family. In terms of assembly, part of the 50S ribosomal subunit. Contacts protein L32.

This chain is Large ribosomal subunit protein bL17, found in Listeria monocytogenes serotype 4b (strain CLIP80459).